A 428-amino-acid polypeptide reads, in one-letter code: uncharacterized protein (428 aa).

Zn(2+) is bound at residue H68. E71 acts as the Proton acceptor in catalysis. Positions 72 and 143 each coordinate Zn(2+).

It belongs to the peptidase M16 family. The cofactor is Zn(2+).

This is an uncharacterized protein from Bacillus subtilis (strain 168).